Here is a 238-residue protein sequence, read N- to C-terminus: tRNA (guanine-N(7)-)-methyltransferase (238 aa).

S-adenosyl-L-methionine contacts are provided by Glu-68, Glu-93, Asp-120, and Asp-143. The active site involves Asp-143. Residues Lys-147, Asp-179, and 216–219 (TKFE) each bind substrate.

The protein belongs to the class I-like SAM-binding methyltransferase superfamily. TrmB family.

The catalysed reaction is guanosine(46) in tRNA + S-adenosyl-L-methionine = N(7)-methylguanosine(46) in tRNA + S-adenosyl-L-homocysteine. The protein operates within tRNA modification; N(7)-methylguanine-tRNA biosynthesis. Catalyzes the formation of N(7)-methylguanine at position 46 (m7G46) in tRNA. This is tRNA (guanine-N(7)-)-methyltransferase from Aliivibrio fischeri (strain MJ11) (Vibrio fischeri).